The chain runs to 395 residues: NKAP-like protein (395 aa).

Disordered regions lie at residues 1–77 (MSPV…RPLP) and 91–247 (CGGY…ISCK). 2 positions are modified to phosphoserine: serine 23 and serine 25. A compositionally biased stretch (polar residues) spans 25 to 35 (SPPSALQTSRS). Basic and acidic residues predominate over residues 109–130 (DQEKEKEESYRQRRLKERERIG). Serine 149 is subject to Phosphoserine. Residues 150-161 (DEHTPAEDEVKN) are compositionally biased toward basic and acidic residues. Composition is skewed to basic residues over residues 177-197 (KTSHSTKKKRKKKPSKRKHKK) and 214-238 (KKVKTKKKEKKKKHRAKQLKKKRTK).

This sequence belongs to the NKAP family. Interacts with RBPJ, CIR1 and HDAC3. Specific to testis (at protein level). Detected in differenting spermatogonia and early spermatocytes (at protein level).

The protein resides in the nucleus. Transcriptional repressor of Notch-mediated signaling. Required for spermatogenesis. The chain is NKAP-like protein from Mus musculus (Mouse).